Consider the following 435-residue polypeptide: Methylenetetrahydrofolate--tRNA-(uracil-5-)-methyltransferase TrmFO (435 aa).

7–12 (GAGLAG) contributes to the FAD binding site.

It belongs to the MnmG family. TrmFO subfamily. It depends on FAD as a cofactor.

The protein resides in the cytoplasm. It catalyses the reaction uridine(54) in tRNA + (6R)-5,10-methylene-5,6,7,8-tetrahydrofolate + NADH + H(+) = 5-methyluridine(54) in tRNA + (6S)-5,6,7,8-tetrahydrofolate + NAD(+). The enzyme catalyses uridine(54) in tRNA + (6R)-5,10-methylene-5,6,7,8-tetrahydrofolate + NADPH + H(+) = 5-methyluridine(54) in tRNA + (6S)-5,6,7,8-tetrahydrofolate + NADP(+). Catalyzes the folate-dependent formation of 5-methyl-uridine at position 54 (M-5-U54) in all tRNAs. This Thermotoga maritima (strain ATCC 43589 / DSM 3109 / JCM 10099 / NBRC 100826 / MSB8) protein is Methylenetetrahydrofolate--tRNA-(uracil-5-)-methyltransferase TrmFO.